Reading from the N-terminus, the 107-residue chain is uncharacterized protein (107 aa).

The span at 88-97 shows a compositional bias: basic and acidic residues; it reads EEKKEKDKGK. The interval 88-107 is disordered; that stretch reads EEKKEKDKGKKGLLSRLKFW. The span at 98–107 shows a compositional bias: basic residues; it reads KGLLSRLKFW.

This is an uncharacterized protein from Methanocaldococcus jannaschii (strain ATCC 43067 / DSM 2661 / JAL-1 / JCM 10045 / NBRC 100440) (Methanococcus jannaschii).